A 912-amino-acid polypeptide reads, in one-letter code: Transcription factor bHLH140 (912 aa).

The segment at 1-57 is disordered; sequence MDDFNLRSENPNSSSTTSSSSSSFHRHKSETGNTKRSRSTSTLSTDPQSVAARDRRH. The segment covering 13-23 has biased composition (low complexity); sequence SSSTTSSSSSS. The region spanning 43–92 is the bHLH domain; sequence LSTDPQSVAARDRRHRISDRFKILQSMVPGGAKMDTVSMLDEAISYVKFL. Position 234 to 241 (234 to 241) interacts with ATP; the sequence is GPPGSGKS. The 180-residue stretch at 511 to 690 folds into the Macro domain; it reads KAKASQKNID…KYKGSQDKAV (180 aa). The span at 657–666 shows a compositional bias: polar residues; that stretch reads PKRSSQTAVS. The disordered stretch occupies residues 657–706; that stretch reads PKRSSQTAVSDSGEDIKEDSERNKKYKGSQDKAVTNNLESESLEDTRGSG. The region spanning 720 to 829 is the HIT domain; sequence LHSIAMHPER…SQDFNSDSLK (110 aa). Residues 870–893 form a C2H2-type zinc finger; sequence LRCNRCRSAHPNIPKLKSHVRSCH.

As to quaternary structure, homodimer.

The protein resides in the nucleus. The protein is Transcription factor bHLH140 (BHLH140) of Arabidopsis thaliana (Mouse-ear cress).